Consider the following 631-residue polypeptide: Occlusion-derived virus envelope protein E66 (631 aa).

The protein belongs to the baculoviridae E66 family.

It localises to the virion membrane. Its function is as follows. Component of the polyhedra envelope. The protein is Occlusion-derived virus envelope protein E66 of Leucania separata nucleopolyhedrovirus (LsNPV).